The chain runs to 911 residues: Valine--tRNA ligase (911 aa).

Residues 57 to 67 (PTVSGSLHVGH) carry the 'HIGH' region motif. The 'KMSKS' region signature appears at 599 to 603 (KMSKS). An ATP-binding site is contributed by Lys602. Positions 882–911 (EESAAEDAPETEVAVEASELGEPPAKKPKH) are disordered.

The protein belongs to the class-I aminoacyl-tRNA synthetase family. ValS type 2 subfamily. In terms of assembly, monomer.

Its subcellular location is the cytoplasm. It carries out the reaction tRNA(Val) + L-valine + ATP = L-valyl-tRNA(Val) + AMP + diphosphate. Functionally, catalyzes the attachment of valine to tRNA(Val). As ValRS can inadvertently accommodate and process structurally similar amino acids such as threonine, to avoid such errors, it has a 'posttransfer' editing activity that hydrolyzes mischarged Thr-tRNA(Val) in a tRNA-dependent manner. This is Valine--tRNA ligase from Bifidobacterium longum (strain DJO10A).